The primary structure comprises 379 residues: Stimulator of interferon genes protein (379 aa).

Residues 1–23 (MPQDPSTRSSPARLLIPEPRAGR) lie on the Cytoplasmic side of the membrane. Residues 24–40 (ARHAACVLLAVCFVVLF) traverse the membrane as a helical segment. Over 41–50 (LSGEPLAPII) the chain is Lumenal. Residues 51–75 (RSVCTQLAALQLGVLLKGCCCLAEE) form a helical membrane-spanning segment. Over 76–97 (IFHLHSRHHGSLWQVLCSCFPP) the chain is Cytoplasmic. Residues 98 to 111 (RWYLALLLVGGSAY) form a helical membrane-spanning segment. Over 112–121 (LDPPEDNGHS) the chain is Lumenal. Residues 122-139 (PRLALTLSCLCQLLVLAL) traverse the membrane as a helical segment. Residues 140 to 379 (GLQKLSAVEV…LPQPLRSDCP (240 aa)) are Cytoplasmic-facing. Positions 158–345 (KNVAHGLAWS…WHLQQQQREE (188 aa)) are cyclic dinucleotide-binding domain (CBD). 3',3'-c-di-GMP-binding positions include serine 167, tyrosine 172, 243–246 (RVYK), and serine 268. 2',3'-cGAMP-binding positions include 167-172 (SYYIGY), 243-246 (RVYK), and serine 268. The pLxIS motif signature appears at 363–366 (LQVS). Serine 366 is modified (phosphoserine; by TBK1).

It belongs to the STING family. In terms of assembly, homodimer; forms a homodimer in absence of cyclic nucleotide (c-di-GMP or cGAMP). Homotetramer; in presence of cyclic nucleotide (c-di-GMP or cGAMP), forms tetramers and higher-order oligomers through side-by-side packing. Interacts (when phosphorylated) with IRF3; following activation and phosphorylation on the pLxIS motif by TBK1, recruits IRF3. Phosphorylation by TBK1 leads to activation and production of IFN-beta. Following cyclic nucleotide (c-di-GMP or cGAMP)-binding, activation and translocation from the endoplasmic reticulum, STING1 is phosphorylated by TBK1 at Ser-366 in the pLxIS motif. The phosphorylated pLxIS motif constitutes an IRF3-binding motif, leading to recruitment of the transcription factor IRF3 to induce type-I interferons and other cytokines.

It localises to the endoplasmic reticulum membrane. The protein localises to the cytoplasm. The protein resides in the perinuclear region. Its subcellular location is the endoplasmic reticulum-Golgi intermediate compartment membrane. It is found in the golgi apparatus membrane. It localises to the cytoplasmic vesicle. The protein localises to the autophagosome membrane. It carries out the reaction H(+)(in) = H(+)(out). In terms of biological role, facilitator of innate immune signaling that acts as a sensor of cytosolic DNA from bacteria and viruses and promotes the production of type I interferon (IFN-alpha and IFN-beta). Innate immune response is triggered in response to non-CpG double-stranded DNA from viruses and bacteria delivered to the cytoplasm. Acts by binding cyclic dinucleotides: recognizes and binds cyclic di-GMP (c-di-GMP), a second messenger produced by bacteria, and cyclic GMP-AMP (cGAMP), a messenger produced by CGAS in response to DNA virus in the cytosol. Upon binding of c-di-GMP or cGAMP, STING1 oligomerizes and is able to activate both NF-kappa-B and IRF3 transcription pathways to induce expression of type I interferon and exert a potent anti-viral state. Exhibits 2',3' phosphodiester linkage-specific ligand recognition: can bind both 2'-3' linked cGAMP and 3'-3' linked cGAMP but is preferentially activated by 2'-3' linked cGAMP. In addition to promote the production of type I interferons, plays a direct role in autophagy. Following cGAMP-binding, STING1 buds from the endoplasmic reticulum into COPII vesicles, which then form the endoplasmic reticulum-Golgi intermediate compartment (ERGIC). The ERGIC serves as the membrane source for LC3 lipidation, leading to formation of autophagosomes that target cytosolic DNA or DNA viruses for degradation by the lysosome. Promotes autophagy by acting as a proton channel that directs proton efflux from the Golgi to facilitate LC3 lipidation. The autophagy- and interferon-inducing activities can be uncoupled and autophagy induction is independent of TBK1 phosphorylation. The polypeptide is Stimulator of interferon genes protein (Gallus gallus (Chicken)).